We begin with the raw amino-acid sequence, 193 residues long: Probable GTP-binding protein EngB (193 aa).

One can recognise an EngB-type G domain in the interval 22-193; it reads SFPEIVFAGR…LAHFDQYICQ (172 aa). GTP-binding positions include 30–37, 57–61, 75–78, 142–145, and 172–174; these read GRSNVGKS, GKTRL, DLPG, TKYD, and YSS. Mg(2+) contacts are provided by S37 and T59.

It belongs to the TRAFAC class TrmE-Era-EngA-EngB-Septin-like GTPase superfamily. EngB GTPase family. It depends on Mg(2+) as a cofactor.

In terms of biological role, necessary for normal cell division and for the maintenance of normal septation. In Pelodictyon phaeoclathratiforme (strain DSM 5477 / BU-1), this protein is Probable GTP-binding protein EngB.